The following is a 166-amino-acid chain: UPF0304 protein PBPRA2768 (166 aa).

It belongs to the UPF0304 family.

The chain is UPF0304 protein PBPRA2768 from Photobacterium profundum (strain SS9).